The following is a 344-amino-acid chain: Heat-inducible transcription repressor HrcA (344 aa).

It belongs to the HrcA family.

Functionally, negative regulator of class I heat shock genes (grpE-dnaK-dnaJ and groELS operons). Prevents heat-shock induction of these operons. The polypeptide is Heat-inducible transcription repressor HrcA (Streptococcus agalactiae serotype III (strain NEM316)).